We begin with the raw amino-acid sequence, 38 residues long: Photosystem II reaction center protein L (38 aa).

The chain crosses the membrane as a helical span at residues 17–37 (SLYWGLLLIFVLAVLFSNYFF).

Belongs to the PsbL family. In terms of assembly, PSII is composed of 1 copy each of membrane proteins PsbA, PsbB, PsbC, PsbD, PsbE, PsbF, PsbH, PsbI, PsbJ, PsbK, PsbL, PsbM, PsbT, PsbX, PsbY, PsbZ, Psb30/Ycf12, at least 3 peripheral proteins of the oxygen-evolving complex and a large number of cofactors. It forms dimeric complexes.

It localises to the plastid. It is found in the chloroplast thylakoid membrane. Its function is as follows. One of the components of the core complex of photosystem II (PSII). PSII is a light-driven water:plastoquinone oxidoreductase that uses light energy to abstract electrons from H(2)O, generating O(2) and a proton gradient subsequently used for ATP formation. It consists of a core antenna complex that captures photons, and an electron transfer chain that converts photonic excitation into a charge separation. This subunit is found at the monomer-monomer interface and is required for correct PSII assembly and/or dimerization. The chain is Photosystem II reaction center protein L from Angiopteris evecta (Mule's foot fern).